A 392-amino-acid polypeptide reads, in one-letter code: MSQHPEAIAAHGGQLVNRVATPAQREEFVSKAEFLPRVQLDERAVSDLEMIAIGGFSPLTGFMNQEDYDRVVSEMRLANGLVWSIPITLSVSEEVASSLQEGGLVRLDNPAGDYIGVLQLTQKYRYDKTREAINVYRTDDAKHPGVQVLYNQGAVNLAGDIWLLERSSHPLFPDYQIDPVASRQMFRDKGWKTIVGFQTRNPIHRAHEYIQKCALETVDGLFLHPLVGATKEDDIAADVRMRCYEILLEHYYPEDRVILAINPAAMRYAGPREAIFHALVRKNYGCTHFIVGRDHAGVGDYYGTYDAQYIFDEFEPGELGIVPMKFEHAFYCTRTKQMATTKTSPSRPEERVHLSGTKVREMLRRGELPPPEFSRPEVAAELARAMRVQVLA.

Belongs to the sulfate adenylyltransferase family.

It carries out the reaction sulfate + ATP + H(+) = adenosine 5'-phosphosulfate + diphosphate. Its pathway is sulfur metabolism; hydrogen sulfide biosynthesis; sulfite from sulfate: step 1/3. The polypeptide is Sulfate adenylyltransferase (Trichormus variabilis (strain ATCC 29413 / PCC 7937) (Anabaena variabilis)).